The chain runs to 288 residues: GCN5-related N-acetyltransferase 6, chloroplastic (288 aa).

The transit peptide at 1 to 111 directs the protein to the chloroplast; the sequence is MSTISIHRTE…YWTAAWLRAE (111 aa). Residues 151–288 form the N-acetyltransferase domain; it reads SCIVAVKKEE…DDTYLLQYTS (138 aa). Residues 215-217, 223-228, 254-256, and tyrosine 261 each bind acetyl-CoA; these read LCV, RQGIAC, and NSV. Tyrosine 261 functions as the Proton donor in the catalytic mechanism.

It belongs to the acetyltransferase family. GNAT subfamily. Oligomer. In terms of processing, autoacetylated. In terms of tissue distribution, expressed in green tissues and in roots.

The protein resides in the plastid. The protein localises to the chloroplast. It localises to the cytoplasm. Its subcellular location is the perinuclear region. It catalyses the reaction an N-terminal L-alpha-aminoacyl-[protein] + acetyl-CoA = N-terminal N(alpha)-acetyl-L-alpha-aminoacyl-[protein] + CoA + H(+). The enzyme catalyses L-lysyl-[protein] + acetyl-CoA = N(6)-acetyl-L-lysyl-[protein] + CoA + H(+). The catalysed reaction is N-terminal L-alanyl-[protein] + acetyl-CoA = N-terminal N(alpha)-acetyl-L-alanyl-[protein] + CoA + H(+). It carries out the reaction N-terminal L-seryl-[protein] + acetyl-CoA = N-terminal N(alpha)-acetyl-L-seryl-[protein] + CoA + H(+). It catalyses the reaction N-terminal L-threonyl-[protein] + acetyl-CoA = N-terminal N(alpha)-acetyl-L-threonyl-[protein] + CoA + H(+). The enzyme catalyses N-terminal L-methionyl-[protein] + acetyl-CoA = N-terminal N(alpha)-acetyl-L-methionyl-[protein] + CoA + H(+). The catalysed reaction is N-terminal L-valyl-[protein] + acetyl-CoA = N-terminal N(alpha)-acetyl-L-valyl-[protein] + CoA + H(+). Functionally, protein acetyltransferase with dual specificity triggering both N-alpha-acetylation (NTA), with a large spectrum of modified N-termini, including methionine, alanine, serine, threonine and to a lower extent valine as substrates, and epsilon-lysine acetylation (KA). This is GCN5-related N-acetyltransferase 6, chloroplastic from Arabidopsis thaliana (Mouse-ear cress).